Consider the following 255-residue polypeptide: Probable transcriptional regulatory protein PCC8801_2028 (255 aa).

This sequence belongs to the TACO1 family.

It localises to the cytoplasm. This Rippkaea orientalis (strain PCC 8801 / RF-1) (Cyanothece sp. (strain PCC 8801)) protein is Probable transcriptional regulatory protein PCC8801_2028.